Reading from the N-terminus, the 102-residue chain is Putative pterin-4-alpha-carbinolamine dehydratase (102 aa).

This sequence belongs to the pterin-4-alpha-carbinolamine dehydratase family.

It carries out the reaction (4aS,6R)-4a-hydroxy-L-erythro-5,6,7,8-tetrahydrobiopterin = (6R)-L-erythro-6,7-dihydrobiopterin + H2O. In Burkholderia ambifaria (strain MC40-6), this protein is Putative pterin-4-alpha-carbinolamine dehydratase.